Consider the following 106-residue polypeptide: Large ribosomal subunit protein uL24 (106 aa).

This sequence belongs to the universal ribosomal protein uL24 family. As to quaternary structure, part of the 50S ribosomal subunit.

Its function is as follows. One of two assembly initiator proteins, it binds directly to the 5'-end of the 23S rRNA, where it nucleates assembly of the 50S subunit. One of the proteins that surrounds the polypeptide exit tunnel on the outside of the subunit. This chain is Large ribosomal subunit protein uL24, found in Rhodospirillum rubrum (strain ATCC 11170 / ATH 1.1.1 / DSM 467 / LMG 4362 / NCIMB 8255 / S1).